The following is a 69-amino-acid chain: Double-strand break reduction protein (69 aa).

Its function is as follows. Helps to maintain the integrity of the chromosome by lowering the steady-state level of double strand breaks. This region of DNA acts as an antitoxin to toxin RalR, a DNase, but it seems to be sRNA RalA that has the antitoxin activity and not this putative protein. Therefore the identity of this as a protein-coding gene has been cast into doubt. The protein is Double-strand break reduction protein of Escherichia coli (strain K12).